The primary structure comprises 292 residues: Homoserine kinase (292 aa).

84–94 provides a ligand contact to ATP; it reads PLARGMGSSSA.

It belongs to the GHMP kinase family. Homoserine kinase subfamily.

The protein localises to the cytoplasm. It carries out the reaction L-homoserine + ATP = O-phospho-L-homoserine + ADP + H(+). It functions in the pathway amino-acid biosynthesis; L-threonine biosynthesis; L-threonine from L-aspartate: step 4/5. In terms of biological role, catalyzes the ATP-dependent phosphorylation of L-homoserine to L-homoserine phosphate. This chain is Homoserine kinase, found in Campylobacter lari (strain RM2100 / D67 / ATCC BAA-1060).